A 1188-amino-acid chain; its full sequence is DNA-directed RNA polymerase subunit beta (1188 aa).

Belongs to the RNA polymerase beta chain family. As to quaternary structure, the RNAP catalytic core consists of 2 alpha, 1 beta, 1 beta' and 1 omega subunit. When a sigma factor is associated with the core the holoenzyme is formed, which can initiate transcription.

The enzyme catalyses RNA(n) + a ribonucleoside 5'-triphosphate = RNA(n+1) + diphosphate. Its function is as follows. DNA-dependent RNA polymerase catalyzes the transcription of DNA into RNA using the four ribonucleoside triphosphates as substrates. This chain is DNA-directed RNA polymerase subunit beta, found in Streptococcus pyogenes serotype M3 (strain ATCC BAA-595 / MGAS315).